Consider the following 289-residue polypeptide: MMVVKKTVRSPGSATVINAIATGRGSAFGIGLRVEAEAELIDSGVECISREGADTSLMELCTRMVIEHYGVDAGVRVVTSSDLPVASGLSSSSAASNATVMAVSSLLSDEFGLQPMEDFEMLNMAVDASLQAGVSVTGAYDDASASFYGGLTVTDNMERRIILREPMENQKVLIYMPDRKSLTAQSDVPRMKLLAPWVDMAFREVLDGRVHSALTLNGILYCASLGFDPGIALDALEAGALAAGLSGTGPSFVALTHEDSEADIIDAWENLEGDVLVTSVDNEGTRVLE.

Position 84–94 (84–94 (PVASGLSSSSA)) interacts with ATP.

Belongs to the GHMP kinase family. Archaeal shikimate kinase subfamily.

It localises to the cytoplasm. The catalysed reaction is shikimate + ATP = 3-phosphoshikimate + ADP + H(+). Its pathway is metabolic intermediate biosynthesis; chorismate biosynthesis; chorismate from D-erythrose 4-phosphate and phosphoenolpyruvate: step 5/7. In Methanothermobacter thermautotrophicus (strain ATCC 29096 / DSM 1053 / JCM 10044 / NBRC 100330 / Delta H) (Methanobacterium thermoautotrophicum), this protein is Shikimate kinase (aroK).